The sequence spans 258 residues: Triosephosphate isomerase (258 aa).

9-11 (NWK) is a binding site for substrate. The active-site Electrophile is the histidine 105. The active-site Proton acceptor is glutamate 176. Glycine 182 and serine 214 together coordinate substrate.

Belongs to the triosephosphate isomerase family. Homodimer.

The protein localises to the cytoplasm. It carries out the reaction D-glyceraldehyde 3-phosphate = dihydroxyacetone phosphate. Its pathway is carbohydrate biosynthesis; gluconeogenesis. It functions in the pathway carbohydrate degradation; glycolysis; D-glyceraldehyde 3-phosphate from glycerone phosphate: step 1/1. Its function is as follows. Involved in the gluconeogenesis. Catalyzes stereospecifically the conversion of dihydroxyacetone phosphate (DHAP) to D-glyceraldehyde-3-phosphate (G3P). In Mycoplasmopsis agalactiae (strain NCTC 10123 / CIP 59.7 / PG2) (Mycoplasma agalactiae), this protein is Triosephosphate isomerase.